The following is a 276-amino-acid chain: NADH-cytochrome b5 reductase 2 (276 aa).

The region spanning 15–127 (EAKYPLPLIE…RGPRGRLFYH (113 aa)) is the FAD-binding FR-type domain. At K17 the chain carries N6-acetyllysine. Y18 is subject to Phosphotyrosine. FAD is bound by residues 107–137 (ENMKIGETIFFRGPRGRLFYHGPGNLGIRPD) and 146–181 (LADHLGMIAGGTGITPMLQLIRHITKDPSDRTRMSL).

Belongs to the flavoprotein pyridine nucleotide cytochrome reductase family. FAD serves as cofactor. As to expression, restricted expression.

The catalysed reaction is 2 Fe(III)-[cytochrome b5] + NADH = 2 Fe(II)-[cytochrome b5] + NAD(+) + H(+). Its function is as follows. NADH-cytochrome b5 reductases are involved in desaturation and elongation of fatty acids, cholesterol biosynthesis, drug metabolism, and, in erythrocyte, methemoglobin reduction. Responsible for NADH-dependent lucigenin chemiluminescence in spermatozoa by reducing both lucigenin and 2-[4-iodophenyl]-3-[4-nitrophenyl]-5-[2,4-disulfophenyl]-2H tetrazolium monosodium salt (WST-1). The sequence is that of NADH-cytochrome b5 reductase 2 from Homo sapiens (Human).